We begin with the raw amino-acid sequence, 250 residues long: MAIQDLLQSSLFIILIGVGIPIAAFLEILFRVILPKTKRVQTQQSPQNISQEQRFPTQQKPANDETSKYSSDSIEKALKDVLGKMDKKENELLTNITNSFNEMKKLIENLNSAVEELALSVKASESDSSSPFNTIIQQEEEHVSREISTVSQLVGSNNPNNVNLTWFIKSCVLLEIMEYDEEKIKQLYELGYVSSDDMFTILRILSFIKNRKITAKELASIAANIAESYSSLTPEIKKYIMILEGGGVNG.

The Extracellular portion of the chain corresponds to 1–9 (MAIQDLLQS). The chain crosses the membrane as a helical span at residues 10–30 (SLFIILIGVGIPIAAFLEILF). Residues 31-250 (RVILPKTKRV…MILEGGGVNG (220 aa)) lie on the Cytoplasmic side of the membrane. Over residues 42–61 (TQQSPQNISQEQRFPTQQKP) the composition is skewed to polar residues. The interval 42–72 (TQQSPQNISQEQRFPTQQKPANDETSKYSSD) is disordered. Residues 62–72 (ANDETSKYSSD) are compositionally biased toward basic and acidic residues.

In terms of assembly, the S.acidocaldarius archaellum assembly machinery and its filament consist of seven proteins (FlaB, FlaF, FlaG, FlaH, FlaI, FlaJ and FlaX). FlaX assembles into ring-shaped oligomers. Interacts directly with FlaH and the motor ATPase FlaI.

The protein resides in the archaeal flagellum. It is found in the cell membrane. The presence of the flagellar core components FlaH, FlaI and FlaJ seems to be crucial for the stability of FlaX. Its function is as follows. Component of the archaellum. FlaX, FlaH and FlaI form the core cytoplasmic motor complex of the crenarchaeal archaellum. FlaX forms a ring that may act as a membrane-bound cytoplasmic scaffold that guides the assembly of the archaellum motor complex. Is essential for archaellum assembly. The chain is Archaeal flagellar motor scaffold protein FlaX from Sulfolobus acidocaldarius (strain ATCC 33909 / DSM 639 / JCM 8929 / NBRC 15157 / NCIMB 11770).